A 243-amino-acid polypeptide reads, in one-letter code: Orotidine 5'-phosphate decarboxylase (243 aa).

Substrate contacts are provided by residues Asp-18, Lys-39, 66 to 75 (DLKFHDIPAT), Thr-130, Arg-192, Gln-201, Gly-221, and Arg-222. The active-site Proton donor is Lys-68.

It belongs to the OMP decarboxylase family. Type 1 subfamily. In terms of assembly, homodimer.

The catalysed reaction is orotidine 5'-phosphate + H(+) = UMP + CO2. It functions in the pathway pyrimidine metabolism; UMP biosynthesis via de novo pathway; UMP from orotate: step 2/2. In terms of biological role, catalyzes the decarboxylation of orotidine 5'-monophosphate (OMP) to uridine 5'-monophosphate (UMP). The sequence is that of Orotidine 5'-phosphate decarboxylase from Synechococcus sp. (strain CC9902).